The following is a 297-amino-acid chain: Large ribosomal subunit protein uL18 (297 aa).

G2 bears the N-acetylglycine mark. K5 and K48 each carry N6-acetyllysine. S185 is subject to Phosphoserine. K220 carries the N6-acetyllysine; alternate modification. Residue K220 forms a Glycyl lysine isopeptide (Lys-Gly) (interchain with G-Cter in SUMO1); alternate linkage. K220 participates in a covalent cross-link: Glycyl lysine isopeptide (Lys-Gly) (interchain with G-Cter in SUMO2); alternate. T232 carries the phosphothreonine modification. Residues 253–297 (YEKKPKREVKKKRWNRPKMSLAQKKDRVAQKKASFLRAQERAAES) form a disordered region. Positions 258 to 268 (KREVKKKRWNR) are enriched in basic residues. Phosphoserine is present on S272.

The protein belongs to the universal ribosomal protein uL18 family. In terms of assembly, component of the large ribosomal subunit (LSU). Part of the 5S RNP complex, which is a LSU subcomplex composed of the 5S RNA, RPL5 and RPL11. Component of a hexameric 5S RNP precursor complex, composed of 5S RNA, RRS1, RPF2/BXDC1, RPL5, RPL11 and HEATR3; this complex acts as a precursor for ribosome assembly. Interacts with NVL in an ATP-dependent manner. Interacts with RRP1B. Interacts with IPO5, IPO7 and KPNB1; these interactions may be involved in RPL5 nuclear import for the assembly of ribosomal subunits. Interacts with RRP1B.

Its subcellular location is the cytoplasm. It localises to the nucleus. The protein localises to the nucleolus. In terms of biological role, component of the ribosome, a large ribonucleoprotein complex responsible for the synthesis of proteins in the cell. The small ribosomal subunit (SSU) binds messenger RNAs (mRNAs) and translates the encoded message by selecting cognate aminoacyl-transfer RNA (tRNA) molecules. The large subunit (LSU) contains the ribosomal catalytic site termed the peptidyl transferase center (PTC), which catalyzes the formation of peptide bonds, thereby polymerizing the amino acids delivered by tRNAs into a polypeptide chain. The nascent polypeptides leave the ribosome through a tunnel in the LSU and interact with protein factors that function in enzymatic processing, targeting, and the membrane insertion of nascent chains at the exit of the ribosomal tunnel. As part of the 5S RNP/5S ribonucleoprotein particle it is an essential component of the LSU, required for its formation and the maturation of rRNAs. It also couples ribosome biogenesis to p53/TP53 activation. As part of the 5S RNP it accumulates in the nucleoplasm and inhibits MDM2, when ribosome biogenesis is perturbed, mediating the stabilization and the activation of TP53. This chain is Large ribosomal subunit protein uL18 (Rpl5), found in Rattus norvegicus (Rat).